Reading from the N-terminus, the 202-residue chain is uncharacterized protein (202 aa).

Disordered stretches follow at residues 1-32 (MRPE…ASLG) and 46-95 (PSSV…PSYT). Residues 47 to 79 (SSVSLSSSSSRRSMPSLGSSRSSSLPSTGSLRS) show a composition bias toward low complexity.

This is an uncharacterized protein from Equus caballus (Horse).